We begin with the raw amino-acid sequence, 155 residues long: Gastrin-releasing peptide (155 aa).

The N-terminal stretch at Met-1 to Ala-31 is a signal peptide. Met-60 is subject to Methionine amide. The propeptide occupies Phe-128–Ser-155.

This sequence belongs to the bombesin/neuromedin-B/ranatensin family. Brain and stomach. In the stomach GRP was localized, at the base of the gastric pits, to occasional cells whose distribution and appearance were consistent with that of gut neuroendocrine cells.

It is found in the secreted. The protein resides in the cytoplasmic vesicle. It localises to the secretory vesicle lumen. Functionally, stimulates the release of gastrin and other gastrointestinal hormones. In Bombina orientalis (Oriental fire-bellied toad), this protein is Gastrin-releasing peptide (grp).